The sequence spans 700 residues: Elongation factor G (700 aa).

The 277-residue stretch at 10–286 (TKVRNIGIMA…AVVDYLPSPL (277 aa)) folds into the tr-type G domain. GTP-binding positions include 19–26 (AHIDAGKT), 83–87 (DTPGH), and 137–140 (NKMD).

Belongs to the TRAFAC class translation factor GTPase superfamily. Classic translation factor GTPase family. EF-G/EF-2 subfamily.

The protein localises to the cytoplasm. Functionally, catalyzes the GTP-dependent ribosomal translocation step during translation elongation. During this step, the ribosome changes from the pre-translocational (PRE) to the post-translocational (POST) state as the newly formed A-site-bound peptidyl-tRNA and P-site-bound deacylated tRNA move to the P and E sites, respectively. Catalyzes the coordinated movement of the two tRNA molecules, the mRNA and conformational changes in the ribosome. This is Elongation factor G from Saccharopolyspora erythraea (strain ATCC 11635 / DSM 40517 / JCM 4748 / NBRC 13426 / NCIMB 8594 / NRRL 2338).